Consider the following 403-residue polypeptide: Alkaline protease 1 (403 aa).

The first 21 residues, 1-21 (MLSIKRTLLLLGAVLPAVFGA), serve as a signal peptide directing secretion. Residues 22-125 (PVQETRRAAQ…QIWYIDALTT (104 aa)) constitute a propeptide that is removed on maturation. The region spanning 36 to 120 (KYIVTFKPGT…HVEEDQIWYI (85 aa)) is the Inhibitor I9 domain. Residues 130–403 (PWGLGSISHK…PNKLAYNGNA (274 aa)) enclose the Peptidase S8 domain. Catalysis depends on charge relay system residues Asp-162 and His-193. N-linked (GlcNAc...) asparagine glycans are attached at residues Asn-253 and Asn-307. The Charge relay system role is filled by Ser-349.

Belongs to the peptidase S8 family.

The protein localises to the secreted. It carries out the reaction Hydrolysis of proteins with broad specificity, and of Bz-Arg-OEt &gt; Ac-Tyr-OEt. Does not hydrolyze peptide amides.. Its function is as follows. Secreted alkaline protease that allows assimilation of proteinaceous substrates. This chain is Alkaline protease 1 (alp1), found in Neosartorya fischeri (strain ATCC 1020 / DSM 3700 / CBS 544.65 / FGSC A1164 / JCM 1740 / NRRL 181 / WB 181) (Aspergillus fischerianus).